The chain runs to 2225 residues: MAALVLEDGSVLQGRPFGAAVSTAGEVVFQTGMVGYPEALTDPSYKAQILVLTYPLIGNYGIPSDEEDEFGLSKWFESSENHVAGLVVGECCPTPSHWSATCTLHEWLQQHGIPGLQGVDTRELTKKLREQGSLLGKLVQSGTEPSTLPFVDPNARPLAPEVSIKTPRVFNAGGAPRICALDCGLKYNQIRCLCQLGAEVTVVPWNHELDSQKYDGLFLSNGPGDPASYPGVVATLNRVLSEPNPRPVFGICLGHQLLALAIGAKTYKMRYGNRGHNQPCLLVGTGRCFLTSQNHGFAVDADSLPAGWTPLFTNANDCSNEGIVHDSLPFFSVQFHPEHRAGPSDMELLFDVFLETVREAVAGNPGGQTVKERLVQRLCPPGLLIPGSGLPPPRKVLILGSGGLSIGQAGEFDYSGSQAIKALKEENIQTLLINPNIATVQTSQGLADKVYFLPITPHYVTQVIRNERPDGVLLTFGGQTALNCGVELTKAGVLARYGVRVLGTPVETIELTEDRRAFAARMAEIGEHVAPSEAANSLEQAQAAAERLGYPVLVRAAFALGGLGSGFASTKEELSALVAPAFAHTSQVLIDKSLKGWKEIEYEVVRDAYGNCVTVCNMENLDPLGIHTGESIVVAPSQTLNDREYQLLRRTAIKVTQHLGIVGECNVQYALNPESEQYYIIEVNARLSRSSALASKATGYPLAYVAAKLALGIPLPELRNSVTGGTAAFEPSLDYCVVKIPRWDLSKFLRVSTKIGSCMKSVGEVMGIGRSFEEAFQKALRMVDENCVGFDHTVKPVSDVELETPTDKRIFVVAAALWAGYSVERLYELTRIDCWFLHRMKRIVTHAQLLEQHRGQPLSQDLLHQAKCLGFSDKQIALAVLSTELAVRKLRQELGICPAVKQIDTVAAEWPAQTNYLYLTYWGNTHDLDFRTPHVLVLGSGVYRIGSSVEFDWCAVGCIQQLRKMGYKTIMVNYNPETVSTDYDMCDRLYFDEISFEVVMDIYELENPDGVILSMGGQLPNNMAMALHRQQCRVLGTSPEAIDSAENRFKFSRLLDTIGISQPQWRELSDLESARQFCQTVGYPCVVRPSYVLSGAAMNVAYTDGDLERFLSSAAAVSKEHPVVISKFIQEAKEIDVDAVACDGVVSAIAISEHVENAGVHSGDATLVTPPQDITPKTLERIKAIVHAVGQELQVTGPFNLQLIAKDDQLKVIECNVRVSRSFPFVSKTLGVDLVALATRIIMGEKVEPIGLMTGSGVVGVKVPQFSFSRLAGADVVLGVEMTSTGEVAGFGESRCEAYLKAMLSTGFKIPKKNILLTIGSYKNKSELLPTVRLLESLGYSLYASLGTADFYTEHGVKVTAVDWHFEEAVDGECPPQRSILDQLAENHFELVINLSMRGAGGRRLSSFVTKGYRTRRLAADFSVPLIIDIKCTKLFVEALGQIGPAPPLKVHVDCMTSQKLVRLPGLIDVHVHLREPGGTHKEDFASGTAAALAGGVTMVCAMPNTRPPIIDAPALALAQKLAEAGARCDFALFLGASSENAGTLGAVAGSAAGLKLYLNETFSELRLDSVAQWMEHFETWPSHLPIVAHAERQSVAAVLMVAQLTQRPVHICHVARKEEILLIKTAKAQGLPVTCEVAPHHLFLNREDLERLGPGRGEVRPELGSREDMEALWENMAVIDCFASDHAPHTLEEKCGPKPPPGFPGLETMLPLLLTAVSEGRLSLDDLLQRLHHNPRRIFHLPLQEDTYVEVDLEHEWTIPSHMPFSKARWTPFEGQKVKGTIRRVVLRGEVAYIDGQVLVPPGYGQDVRKWPQGAVPQPPPSAPATTEITTTPERPRRVIPGLPDGRFHLPPRIHRASDPGLPAEEPKEKPSRKVVEPELMGTPDGPCYPAPPVPRQASPQNLGSSGLLHPQTSPLLHSLVGQHILSVKQFTKDQMSHLFNVAHTLRMMVQKERSLDILKGKVMASMFYEVSTRTSSSFAAAMARLGGAVLSFSEATSSVQKGESLADSVQTMSCYADVVVLRHPQPGAVELAAKHCRRPVINAGDGVGEHPTQALLDIFTIREELGTVNGMTITMVGDLKHGRTVHSLACLLTQYRVSLRYVAPPSLRMPPSVWDFVASRGTKQEEFESIEEALPDTDVLYMTRIQKERFGSTQEYEACFGQFILTPHIMTRAKKKMVVMHPMPRVNEISVEVDSDPRAAYFRQAENGMYIRMALLATVLGRF.

Ala-2 carries the post-translational modification N-acetylalanine. The tract at residues 2-365 (AALVLEDGSV…TVREAVAGNP (364 aa)) is GATase (Glutamine amidotransferase). Ser-44, Gly-222, and Gly-224 together coordinate L-glutamine. A Glutamine amidotransferase type-1 domain is found at 177-363 (RICALDCGLK…LETVREAVAG (187 aa)). The active-site Nucleophile; for GATase activity is Cys-252. L-glutamine is bound by residues Leu-253, Gln-256, Asn-294, Gly-296, and Phe-297. Catalysis depends on for GATase activity residues His-336 and Glu-338. The linker stretch occupies residues 366–394 (GGQTVKERLVQRLCPPGLLIPGSGLPPPR). Positions 395-933 (KVLILGSGGL…NTHDLDFRTP (539 aa)) are CPSase A. Residues 395 to 1455 (KVLILGSGGL…APPLKVHVDC (1061 aa)) form a CPSase (Carbamoyl phosphate synthase) region. A Phosphothreonine; by MAPK1 modification is found at Thr-456. ATP contacts are provided by Arg-515, Arg-555, Gly-561, Gly-562, Lys-592, Glu-599, Gly-625, Ile-626, His-627, Gln-668, and Glu-682. The region spanning 519–711 (AARMAEIGEH…LAYVAAKLAL (193 aa)) is the ATP-grasp 1 domain. Mg(2+) contacts are provided by Gln-668, Glu-682, and Asn-684. Mn(2+) contacts are provided by Gln-668, Glu-682, and Asn-684. An N6-acetyllysine modification is found at Lys-747. Residues 934–1455 (HVLVLGSGVY…APPLKVHVDC (522 aa)) are CPSase B. Phosphoserine is present on Ser-1038. The 192-residue stretch at 1052–1243 (SRLLDTIGIS…LVALATRIIM (192 aa)) folds into the ATP-grasp 2 domain. ATP contacts are provided by Arg-1088, Lys-1127, Ile-1129, Glu-1134, Gly-1159, Val-1160, His-1161, Ser-1162, Gln-1202, and Glu-1214. 3 residues coordinate Mg(2+): Gln-1202, Glu-1214, and Asn-1216. The Mn(2+) site is built by Gln-1202, Glu-1214, and Asn-1216. One can recognise an MGS-like domain in the interval 1308–1462 (FKIPKKNILL…VDCMTSQKLV (155 aa)). Ser-1406 bears the Phosphoserine; by PKA mark. Lys-1411 carries the N6-acetyllysine modification. Residues 1456–1788 (MTSQKLVRLP…VKGTIRRVVL (333 aa)) are DHOase (dihydroorotase). The Zn(2+) site is built by His-1471 and His-1473. Positions 1475 and 1505 each coordinate (S)-dihydroorotate. Zn(2+) contacts are provided by Lys-1556, His-1590, Cys-1613, His-1614, and Glu-1637. Lys-1556 is subject to N6-carboxylysine. Arg-1661 is a binding site for (S)-dihydroorotate. Asp-1686 is a Zn(2+) binding site. Asp-1686 serves as the catalytic For DHOase activity. His-1690 and Pro-1702 together coordinate (S)-dihydroorotate. Positions 1789 to 1917 (RGEVAYIDGQ…GLLHPQTSPL (129 aa)) are linker. A disordered region spans residues 1813–1911 (PQGAVPQPPP…QNLGSSGLLH (99 aa)). Residues 1825–1834 (PATTEITTTP) are compositionally biased toward low complexity. The residue at position 1859 (Ser-1859) is a Phosphoserine; by RPS6KB1 and PKA. Residues 1866-1878 (EEPKEKPSRKVVE) are compositionally biased toward basic and acidic residues. A Phosphoserine; by PKC; in vitro modification is found at Ser-1873. Thr-1884 is modified (phosphothreonine). Over residues 1899-1911 (ASPQNLGSSGLLH) the composition is skewed to polar residues. 2 positions are modified to phosphoserine: Ser-1900 and Ser-1938. The segment at 1918 to 2225 (LHSLVGQHIL…ALLATVLGRF (308 aa)) is ATCase (Aspartate transcarbamylase). The carbamoyl phosphate site is built by Arg-1975 and Thr-1976. Lys-2003 is an L-aspartate binding site. Residues Arg-2024, His-2052, and Gln-2055 each contribute to the carbamoyl phosphate site. Residues Arg-2085 and Arg-2146 each contribute to the L-aspartate site. Carbamoyl phosphate is bound by residues Met-2185 and Pro-2186.

This sequence in the N-terminal section; belongs to the CarA family. It in the 2nd section; belongs to the CarB family. The protein in the 3rd section; belongs to the metallo-dependent hydrolases superfamily. DHOase family. CAD subfamily. In the C-terminal section; belongs to the aspartate/ornithine carbamoyltransferase superfamily. ATCase family. As to quaternary structure, homohexamer. Interacts with CIPC. Zn(2+) serves as cofactor. Mg(2+) is required as a cofactor. Requires Mn(2+) as cofactor. In terms of processing, activated by MAP kinase (Erk1/2) phosphorylation just prior to the S phase of the cell cycle, when the demand for pyrimidine nucleotides is greatest, and down-regulated as the cells emerge from S phase by protein kinase A (PKA) phosphorylation. Phosphorylation at Ser-1859 by RPS6KB1 downstream of MTOR promotes oligomerization and stimulates dihydroorotase activity. Phosphorylation at Ser-1406 reduces sensitivity to feedback inhibition by UTP.

Its subcellular location is the cytoplasm. It is found in the nucleus. The catalysed reaction is hydrogencarbonate + L-glutamine + 2 ATP + H2O = carbamoyl phosphate + L-glutamate + 2 ADP + phosphate + 2 H(+). It carries out the reaction L-glutamine + H2O = L-glutamate + NH4(+). The enzyme catalyses hydrogencarbonate + NH4(+) + 2 ATP = carbamoyl phosphate + 2 ADP + phosphate + 2 H(+). It catalyses the reaction carbamoyl phosphate + L-aspartate = N-carbamoyl-L-aspartate + phosphate + H(+). The catalysed reaction is (S)-dihydroorotate + H2O = N-carbamoyl-L-aspartate + H(+). The protein operates within pyrimidine metabolism; UMP biosynthesis via de novo pathway; (S)-dihydroorotate from bicarbonate: step 1/3. It functions in the pathway pyrimidine metabolism; UMP biosynthesis via de novo pathway; (S)-dihydroorotate from bicarbonate: step 2/3. It participates in pyrimidine metabolism; UMP biosynthesis via de novo pathway; (S)-dihydroorotate from bicarbonate: step 3/3. Allosterically regulated and controlled by phosphorylation. 5-phosphoribose 1-diphosphate (PRPP) is an activator while UMP and UTP are inhibitors of the CPSase reaction. Functionally, multifunctional protein that encodes the first 3 enzymatic activities of the de novo pyrimidine pathway: carbamoylphosphate synthetase (CPSase; EC 6.3.5.5), aspartate transcarbamylase (ATCase; EC 2.1.3.2) and dihydroorotase (DHOase; EC 3.5.2.3). The CPSase-function is accomplished in 2 steps, by a glutamine-dependent amidotransferase activity (GATase) that binds and cleaves glutamine to produce ammonia, followed by an ammonium-dependent carbamoyl phosphate synthetase, which reacts with the ammonia, hydrogencarbonate and ATP to form carbamoyl phosphate. The endogenously produced carbamoyl phosphate is sequestered and channeled to the ATCase active site. ATCase then catalyzes the formation of carbamoyl-L-aspartate from L-aspartate and carbamoyl phosphate. In the last step, DHOase catalyzes the cyclization of carbamoyl aspartate to dihydroorotate. This is Multifunctional protein CAD (CAD) from Mesocricetus auratus (Golden hamster).